The chain runs to 182 residues: P21 prophage-derived terminase small subunit (182 aa).

31 to 36 contacts ATP; it reads SKGSKG.

It belongs to the terminase small subunit family. As to quaternary structure, heterooligomer of gp1 and gp2.

Functionally, involved in the initiation of the phage DNA packaging into the prohead. Processes replicating concatemeric DNA into pieces of unit length with cohesive ends. This chain is P21 prophage-derived terminase small subunit (nohA), found in Escherichia coli O6:H1 (strain CFT073 / ATCC 700928 / UPEC).